The sequence spans 260 residues: uncharacterized protein (260 aa).

Positions 1–22 (MGNIKSFALYISILLLIVVVAG) are cleaved as a signal peptide. Cys-23 carries the N-palmitoyl cysteine lipid modification. A lipid anchor (S-diacylglycerol cysteine) is attached at Cys-23.

This sequence belongs to the staphylococcal tandem lipoprotein family.

The protein localises to the cell membrane. This is an uncharacterized protein from Staphylococcus aureus (strain MRSA252).